Here is a 577-residue protein sequence, read N- to C-terminus: CDPK-related kinase 7 (577 aa).

A disordered region spans residues 1–38 (MGLCHGKPIEQQSKNLPISNEIEETPKNSSQKAKSSGF). Residue Gly-2 is the site of N-myristoyl glycine attachment. In terms of domain architecture, Protein kinase spans 124-386 (YEIDGEVGRG…AAQALCHPWL (263 aa)). ATP is bound by residues 130–138 (VGRGHFGYT) and Lys-156. Catalysis depends on Asp-252, which acts as the Proton acceptor. Residue Ser-292 is modified to Phosphoserine. Position 334 is a phosphoserine; by CPK1, CPK10 and CPK34 (Ser-334). Residues 391-421 (ELKIPSDMIIYKLVKVYIMSSSLRKSALAAL) form an autoinhibitory domain region. The tract at residues 410–430 (SSSLRKSALAALAKTLTVPQL) is calmodulin binding (CaMBD). EF-hand domains are found at residues 428-464 (PQLT…STEA), 465-500 (TKDS…VYQL), 501-540 (EAME…GPSV), and 543-572 (HVVL…VSSR). Ca(2+) contacts are provided by Ser-443, Asn-445, Tyr-447, Lys-484, Glu-489, Asp-520, Asn-522, Glu-529, Asp-554, and Lys-556. A Phosphoserine modification is found at Ser-558.

Belongs to the protein kinase superfamily. Ser/Thr protein kinase family. CDPK subfamily. Binds calmodulin (CaM) in a calcium-dependent manner. Post-translationally, autophosphorylated.

Its subcellular location is the membrane. The catalysed reaction is L-seryl-[protein] + ATP = O-phospho-L-seryl-[protein] + ADP + H(+). The enzyme catalyses L-threonyl-[protein] + ATP = O-phospho-L-threonyl-[protein] + ADP + H(+). Activated by calcium and calmodulin. Autophosphorylation may play an important role in the regulation of the kinase activity. Functionally, may play a role in signal transduction pathways that involve calcium as a second messenger. In Arabidopsis thaliana (Mouse-ear cress), this protein is CDPK-related kinase 7 (CRK7).